A 197-amino-acid chain; its full sequence is Imidazoleglycerol-phosphate dehydratase (197 aa).

This sequence belongs to the imidazoleglycerol-phosphate dehydratase family.

The protein resides in the cytoplasm. The enzyme catalyses D-erythro-1-(imidazol-4-yl)glycerol 3-phosphate = 3-(imidazol-4-yl)-2-oxopropyl phosphate + H2O. Its pathway is amino-acid biosynthesis; L-histidine biosynthesis; L-histidine from 5-phospho-alpha-D-ribose 1-diphosphate: step 6/9. In Chromobacterium violaceum (strain ATCC 12472 / DSM 30191 / JCM 1249 / CCUG 213 / NBRC 12614 / NCIMB 9131 / NCTC 9757 / MK), this protein is Imidazoleglycerol-phosphate dehydratase.